A 210-amino-acid polypeptide reads, in one-letter code: Large ribosomal subunit protein bL25 (210 aa).

A disordered region spans residues 185 to 210; sequence APEPAGQPEVPPEPAEEAKAKTIEKE. Basic and acidic residues predominate over residues 200 to 210; sequence EEAKAKTIEKE.

It belongs to the bacterial ribosomal protein bL25 family. CTC subfamily. In terms of assembly, part of the 50S ribosomal subunit; part of the 5S rRNA/L5/L18/L25 subcomplex. Contacts the 5S rRNA. Binds to the 5S rRNA independently of L5 and L18.

Functionally, this is one of the proteins that binds to the 5S RNA in the ribosome where it forms part of the central protuberance. The polypeptide is Large ribosomal subunit protein bL25 (Desulforamulus reducens (strain ATCC BAA-1160 / DSM 100696 / MI-1) (Desulfotomaculum reducens)).